The primary structure comprises 650 residues: SPARC-like protein 1 (650 aa).

Residues 1–16 form the signal peptide; that stretch reads MKAVLLLLCALGTAVA. Residues 51–352 are disordered; the sequence is TADIENHPSD…HGAGDDYFIP (302 aa). Over residues 54–64 the composition is skewed to basic and acidic residues; it reads IENHPSDKAEK. 3 positions are modified to phosphoserine: serine 70, serine 78, and serine 86. Residues 75–85 are compositionally biased toward basic and acidic residues; that stretch reads HEQSTEQDKTY. Over residues 91–101 the composition is skewed to acidic residues; that stretch reads LKDEEDGDGDL. Composition is skewed to polar residues over residues 116 to 126 and 135 to 148; these read EGTSEPQQKSL and TVSTSYVDPNQRAN. N-linked (GlcNAc...) asparagine glycosylation occurs at asparagine 148. Phosphoserine is present on residues serine 155 and serine 163. A compositionally biased stretch (polar residues) spans 157–174; that stretch reads EQPVSDSHQQPNESSKQT. Asparagine 168 carries an N-linked (GlcNAc...) asparagine glycan. Positions 189-210 are enriched in acidic residues; that stretch reads IPNEEEEEEEDEEEEEEEEPED. At serine 272 the chain carries Phosphoserine. The span at 277–299 shows a compositional bias: basic and acidic residues; that stretch reads EDKAAGSKEHIPHTEQQDQEGKA. Serine 353 is modified (phosphoserine). The interval 375–415 is disordered; sequence EETTTGESENRREAADNQEAKKAESSPNAEPSDEGNSREHS. Positions 382-398 are enriched in basic and acidic residues; that stretch reads SENRREAADNQEAKKAE. Serine 406 is modified (phosphoserine). Residues 418 to 440 form the Follistatin-like domain; that stretch reads SCTNFQCKRGHICKTDPQGKPHC. Disulfide bonds link cysteine 419–cysteine 430, cysteine 424–cysteine 440, cysteine 442–cysteine 476, cysteine 448–cysteine 469, cysteine 458–cysteine 495, cysteine 501–cysteine 612, and cysteine 620–cysteine 636. Positions 436 to 497 constitute a Kazal-like domain; it reads GKPHCVCQDP…QLDYFGACKS (62 aa). N-linked (GlcNAc...) asparagine glycosylation is present at asparagine 462. In terms of domain architecture, EF-hand spans 608 to 643; it reads PMEHCITRFFEECDPNKDKHITLKEWGHCFGIKEED. Ca(2+)-binding residues include aspartate 621, asparagine 623, aspartate 625, histidine 627, and glutamate 632.

This sequence belongs to the SPARC family. In terms of tissue distribution, highest expression in brain. Moderate levels in heart, adrenal gland, epididymis and lung. Low levels in kidney, eye, liver, spleen, submandibular gland and testis.

The protein localises to the secreted. Its subcellular location is the extracellular space. The protein resides in the extracellular matrix. This Mus musculus (Mouse) protein is SPARC-like protein 1 (Sparcl1).